The primary structure comprises 153 residues: Nucleoside diphosphate kinase (153 aa).

Lys13, Phe61, Arg89, Thr95, Arg106, and Asn116 together coordinate ATP. The active-site Pros-phosphohistidine intermediate is His119.

This sequence belongs to the NDK family. Mg(2+) serves as cofactor.

The protein resides in the cytoplasm. It localises to the cell membrane. The catalysed reaction is a 2'-deoxyribonucleoside 5'-diphosphate + ATP = a 2'-deoxyribonucleoside 5'-triphosphate + ADP. It carries out the reaction a ribonucleoside 5'-diphosphate + ATP = a ribonucleoside 5'-triphosphate + ADP. In terms of biological role, major role in the synthesis of nucleoside triphosphates other than ATP. The ATP gamma phosphate is transferred to the NDP beta phosphate via a ping-pong mechanism, using a phosphorylated active-site intermediate. The polypeptide is Nucleoside diphosphate kinase (Gallus gallus (Chicken)).